The chain runs to 366 residues: tRNA 2-selenouridine synthase (366 aa).

In terms of domain architecture, Rhodanese spans 12–135; the sequence is FLNDVPMMDA…MRTFLLDTLH (124 aa). Cys95 functions as the S-selanylcysteine intermediate in the catalytic mechanism.

It belongs to the SelU family. In terms of assembly, monomer.

It carries out the reaction 5-methylaminomethyl-2-thiouridine(34) in tRNA + selenophosphate + (2E)-geranyl diphosphate + H2O + H(+) = 5-methylaminomethyl-2-selenouridine(34) in tRNA + (2E)-thiogeraniol + phosphate + diphosphate. It catalyses the reaction 5-methylaminomethyl-2-thiouridine(34) in tRNA + (2E)-geranyl diphosphate = 5-methylaminomethyl-S-(2E)-geranyl-thiouridine(34) in tRNA + diphosphate. The enzyme catalyses 5-methylaminomethyl-S-(2E)-geranyl-thiouridine(34) in tRNA + selenophosphate + H(+) = 5-methylaminomethyl-2-(Se-phospho)selenouridine(34) in tRNA + (2E)-thiogeraniol. The catalysed reaction is 5-methylaminomethyl-2-(Se-phospho)selenouridine(34) in tRNA + H2O = 5-methylaminomethyl-2-selenouridine(34) in tRNA + phosphate. Involved in the post-transcriptional modification of the uridine at the wobble position (U34) of tRNA(Lys), tRNA(Glu) and tRNA(Gln). Catalyzes the conversion of 2-thiouridine (S2U-RNA) to 2-selenouridine (Se2U-RNA). Acts in a two-step process involving geranylation of 2-thiouridine (S2U) to S-geranyl-2-thiouridine (geS2U) and subsequent selenation of the latter derivative to 2-selenouridine (Se2U) in the tRNA chain. The polypeptide is tRNA 2-selenouridine synthase (Pseudomonas syringae pv. syringae (strain B728a)).